A 247-amino-acid chain; its full sequence is MKINNQQRTGFGYFLYGIQLALSPEIRRFVVLPLLANIILVGGAIFYLFSHLNMWIEGWIGQLPEFLSWLTYILWPLLALTILATFSYFFSTLANFIAAPFNGLLAEKVEETLTGKKINDDGFTAVLKDVPRVLAREWRKLLYILPKAIGLFLLLLIPALGQTVGPVLWFIFTAWMLAIQYCDYPFDNHKIPFNDMRYKLKQKQGKAYGFGVLVSVFTTIPILNLIVMPVAICGATAMWVAEFKHQR.

Helical transmembrane passes span 29 to 49 (FVVL…FYLF), 66 to 86 (FLSW…LATF), 141 to 160 (LLYI…IPAL), 164 to 186 (VGPV…DYPF), and 212 to 232 (VLVS…PVAI).

Belongs to the CysZ family.

The protein resides in the cell inner membrane. In terms of biological role, high affinity, high specificity proton-dependent sulfate transporter, which mediates sulfate uptake. Provides the sulfur source for the cysteine synthesis pathway. The sequence is that of Sulfate transporter CysZ from Vibrio parahaemolyticus serotype O3:K6 (strain RIMD 2210633).